We begin with the raw amino-acid sequence, 431 residues long: Tol-Pal system protein TolB (431 aa).

Residues methionine 1–alanine 26 form the signal peptide. The tract at residues aspartate 406–glutamine 431 is disordered.

It belongs to the TolB family. The Tol-Pal system is composed of five core proteins: the inner membrane proteins TolA, TolQ and TolR, the periplasmic protein TolB and the outer membrane protein Pal. They form a network linking the inner and outer membranes and the peptidoglycan layer.

It localises to the periplasm. Its function is as follows. Part of the Tol-Pal system, which plays a role in outer membrane invagination during cell division and is important for maintaining outer membrane integrity. This is Tol-Pal system protein TolB from Burkholderia cenocepacia (strain ATCC BAA-245 / DSM 16553 / LMG 16656 / NCTC 13227 / J2315 / CF5610) (Burkholderia cepacia (strain J2315)).